The primary structure comprises 139 residues: Large ribosomal subunit protein uL16 (139 aa).

Over residues 1–16 (MLIPKRTKYRKQHRPD) the composition is skewed to basic residues. Residues 1–23 (MLIPKRTKYRKQHRPDRHGMSKG) are disordered.

It belongs to the universal ribosomal protein uL16 family. As to quaternary structure, part of the 50S ribosomal subunit.

Functionally, binds 23S rRNA and is also seen to make contacts with the A and possibly P site tRNAs. The sequence is that of Large ribosomal subunit protein uL16 from Bifidobacterium animalis subsp. lactis (strain AD011).